Here is a 472-residue protein sequence, read N- to C-terminus: MPNANAIANVFKLIEENNVKFVLLRFTDIKGKEHGVSIPVSLVDEDMFEDGKMFDGSSVEGWKTINKADMLLMPMAETAIVDPFAQIPTLSIRCSVYEPTTMQSYDRDPRSIAIRAENYMRSTGIADQAFFGPEPEFFLFDDVRFNVSMNKASFSIDDIEAAWNTNKKYEEGNNAYRPLKKGGYCAVAPIDSAHDIRSEMCLILEEMGLVIEAHHHEVATAGQNEIATKFNTLTLKADETQIYKHVVQNVALEHGKTACFMPKPITGDNGSGMHCNMSLSKDGKNIFQGDKYAGLSETALYYIGGIIKHAKALNAFTNPSTNSYKRLVPGYEAPVLLAYSASNRSASIRIPAVTNPKAIRVEARFPDPLANPYLAFAALLMAGLDGVVNKIHPGDAMDKNLYDLPPEELKDIPAVASSLEEALNSLEKDYEFLTQGGVFAKDFIDAFISIKRKEVERLNMAPHPVEFEMYYA.

A GS beta-grasp domain is found at 17–101; sequence NNVKFVLLRF…IRCSVYEPTT (85 aa). The 364-residue stretch at 109–472 folds into the GS catalytic domain; the sequence is PRSIAIRAEN…HPVEFEMYYA (364 aa). The Mg(2+) site is built by glutamate 134 and glutamate 136. Glutamate 212 is an ATP binding site. Mg(2+)-binding residues include glutamate 217 and glutamate 225. L-glutamate contacts are provided by residues 269–270 and glycine 270; that span reads NG. Mg(2+) is bound at residue histidine 274. ATP contacts are provided by residues 276–278 and serine 278; that span reads NMS. Residues arginine 326, glutamate 332, and arginine 344 each coordinate L-glutamate. The ATP site is built by arginine 344, arginine 349, and lysine 357. Position 362 (glutamate 362) interacts with Mg(2+). Residue arginine 364 coordinates L-glutamate. Tyrosine 402 is subject to O-AMP-tyrosine.

This sequence belongs to the glutamine synthetase family. In terms of assembly, oligomer of 12 subunits arranged in the form of two hexameric ring. Mg(2+) serves as cofactor.

The protein localises to the cytoplasm. The enzyme catalyses L-glutamate + NH4(+) + ATP = L-glutamine + ADP + phosphate + H(+). Its activity is regulated as follows. The activity of this enzyme could be controlled by adenylation under conditions of abundant glutamine. Its function is as follows. Catalyzes the ATP-dependent biosynthesis of glutamine from glutamate and ammonia. The sequence is that of Glutamine synthetase from Haemophilus influenzae (strain ATCC 51907 / DSM 11121 / KW20 / Rd).